The sequence spans 105 residues: MTANRLTLSGTVCKAPMRKVSPSGIPHCQFVLEHRSQQVEAGFNRQVWCRMPVIISGKAHQAITQSITVGTQLTVQGFICSHQGRNGLNKMVLHAEQIELIDSGD.

The SSB domain occupies 1–102 (MTANRLTLSG…LHAEQIELID (102 aa)).

It belongs to the PriB family. As to quaternary structure, homodimer. Interacts with PriA and DnaT. Component of the replication restart primosome. Primosome assembly occurs via a 'hand-off' mechanism. PriA binds to replication forks, subsequently PriB then DnaT bind; DnaT then displaces ssDNA to generate the helicase loading substrate.

Involved in the restart of stalled replication forks, which reloads the replicative helicase on sites other than the origin of replication; the PriA-PriB pathway is the major replication restart pathway. During primosome assembly it facilitates complex formation between PriA and DnaT on DNA; stabilizes PriA on DNA. Stimulates the DNA unwinding activity of PriA helicase. The polypeptide is Replication restart protein PriB (Erwinia tasmaniensis (strain DSM 17950 / CFBP 7177 / CIP 109463 / NCPPB 4357 / Et1/99)).